A 306-amino-acid polypeptide reads, in one-letter code: Manganese transport system membrane protein MntB (306 aa).

The Periplasmic segment spans residues 1 to 25; it reads MNQLVVAFPFWHWLVEPLQYEFLIR. Residues 26–46 traverse the membrane as a helical segment; sequence AIWVSAFVGLVCAVLSCYITL. The Cytoplasmic portion of the chain corresponds to 47-48; sequence KG. The chain crosses the membrane as a helical span at residues 49 to 69; sequence WSLMGDAISHAVVPGVVLAYA. Over 70 to 71 the chain is Periplasmic; that stretch reads LN. Residues 72-92 form a helical membrane-spanning segment; it reads IPFAIGAFTFGFGATVAIGYV. The Cytoplasmic segment spans residues 93–101; the sequence is KSKTRLKED. Residues 102–122 form a helical membrane-spanning segment; it reads AVIGIVFTGFFALGLVLVTKI. Residues 123 to 141 lie on the Periplasmic side of the membrane; that stretch reads PSNVDLFHILFGNVLGISQ. The helical transmembrane segment at 142-162 threads the bilayer; the sequence is QDIIQTLIAGSITLIVILLRR. Over 163–179 the chain is Cytoplasmic; that stretch reads KDLLLFCFDPNHAKAIG. Residues 180-200 traverse the membrane as a helical segment; it reads LRTQVMYYTLLSVLALTIVAA. Topologically, residues 201 to 202 are periplasmic; the sequence is LQ. The helical transmembrane segment at 203 to 223 threads the bilayer; sequence TAGIILVISMLVTPGSIGYLL. Residues 224–228 lie on the Cytoplasmic side of the membrane; sequence SDRFD. A helical transmembrane segment spans residues 229 to 249; that stretch reads HMLWYSVVSSVLSCVLGTYLS. The Periplasmic portion of the chain corresponds to 250-255; it reads YHFDVS. Residues 256 to 276 traverse the membrane as a helical segment; it reads TGGMIVVILTTLFVIAMIGAP. At 277–306 the chain is on the cytoplasmic side; sequence KYGILAQEWRKRSGPNPEDDENQTVVVDQV.

It belongs to the ABC-3 integral membrane protein family.

The protein resides in the cell membrane. Part of an ATP-driven transport system for manganese. This is Manganese transport system membrane protein MntB (mntB) from Synechocystis sp. (strain ATCC 27184 / PCC 6803 / Kazusa).